Consider the following 973-residue polypeptide: ATP-dependent DNA helicase homolog RECG1, chloroplastic/mitochondrial (973 aa).

The interval 1-208 is sufficient for chloroplastic and mitochondrial trgeting; it reads MAAVTLSPCS…ATSEVEATSD (208 aa). Positions 174-200 are disordered; it reads LLQNDDSSDPREDILDDGSSFTSKTAT. The Helicase ATP-binding domain maps to 536–725; that stretch reads DLKRPVPMNR…LYGDISLTQI (190 aa). 549-556 contributes to the ATP binding site; sequence GDVGCGKT. Positions 655 to 658 match the DEQQ box motif; sequence DEQQ. Positions 746–904 constitute a Helicase C-terminal domain; sequence GIKEVYSMML…GFYLANIDLL (159 aa).

The protein belongs to the helicase family. RecG subfamily. As to expression, expressed in most tissues, not seen in pollen, ovules or developing seeds.

It is found in the plastid. The protein localises to the chloroplast. It localises to the mitochondrion. It carries out the reaction Couples ATP hydrolysis with the unwinding of duplex DNA by translocating in the 3'-5' direction.. It catalyses the reaction ATP + H2O = ADP + phosphate + H(+). In terms of biological role, plays a critical role in recombination and DNA repair. Helps process Holliday junction (HJ) intermediates to mature products by catalyzing branch migration. Has replication fork regression activity, unwinds stalled or blocked replication forks to make a HJ that can be resolved. Has a DNA unwinding activity characteristic of a DNA helicase with 3'-5' polarity. Plays a role in recombination surveillance and repair of double-stranded (ds)DNA breaks in the mitochondrion. May be able to dissociate D- and R-loops. Able to complement UV sensitivity of a recG deletion in E.coli. This Arabidopsis thaliana (Mouse-ear cress) protein is ATP-dependent DNA helicase homolog RECG1, chloroplastic/mitochondrial.